Here is a 310-residue protein sequence, read N- to C-terminus: N-acetyl-gamma-glutamyl-phosphate reductase (310 aa).

The active site involves cysteine 117.

The protein belongs to the NAGSA dehydrogenase family. Type 2 subfamily.

The protein localises to the cytoplasm. The enzyme catalyses N-acetyl-L-glutamate 5-semialdehyde + phosphate + NADP(+) = N-acetyl-L-glutamyl 5-phosphate + NADPH + H(+). It participates in amino-acid biosynthesis; L-arginine biosynthesis; N(2)-acetyl-L-ornithine from L-glutamate: step 3/4. Catalyzes the NADPH-dependent reduction of N-acetyl-5-glutamyl phosphate to yield N-acetyl-L-glutamate 5-semialdehyde. The chain is N-acetyl-gamma-glutamyl-phosphate reductase from Brucella melitensis biotype 1 (strain ATCC 23456 / CCUG 17765 / NCTC 10094 / 16M).